We begin with the raw amino-acid sequence, 297 residues long: MLLGSHVSMSGKKMLLGSAEEAASYGSTTFMIYTGAPQNTRRKPIEEMNIEAGQAFMKEHNLSNIVVHAPYIINLGNTIKTENFGFAVDFLRQEIERAQALGATQITLHPGAHVGAGPEAGIKQIVKGLNEVLWKEQIPQIALETMAGKGTEIGRTFDELAAIIDGVTLNDKLSVTLDTCHINDAGYNVKDDFDGVLVEFDKIIGLDRLKVIHVNDSKNPMGSHKDRHANIGFGTIGFEALNGVVHHEKLTALPKILETPYVGEDKKNKKAPYGFEIAMLKNQTFDPELLEKIQGQN.

Positions 68, 109, 144, 178, 181, 213, 226, 228, and 258 each coordinate Zn(2+).

The protein belongs to the AP endonuclease 2 family. The cofactor is Zn(2+).

It carries out the reaction Endonucleolytic cleavage to 5'-phosphooligonucleotide end-products.. Endonuclease IV plays a role in DNA repair. It cleaves phosphodiester bonds at apurinic or apyrimidinic (AP) sites, generating a 3'-hydroxyl group and a 5'-terminal sugar phosphate. The polypeptide is Probable endonuclease 4 (Enterococcus faecalis (strain ATCC 700802 / V583)).